Reading from the N-terminus, the 396-residue chain is ATP-dependent RNA helicase eIF4A (396 aa).

The Q motif motif lies at 23-51 (YEFDDMNLNEKLLRGVFGYGFNKPSAIQQ). The Helicase ATP-binding domain occupies 54–223 (IMPIIEGNDV…AKFMQNPVRI (170 aa)). 67–74 (AQSGTGKT) contacts ATP. The short motif at 171–174 (DEAD) is the DEAD box element. Positions 234–395 (GIKQFYVNVE…ELPSDIGTLF (162 aa)) constitute a Helicase C-terminal domain.

This sequence belongs to the DEAD box helicase family. eIF4A subfamily. In terms of assembly, component of the eIF4F complex, which composition varies with external and internal environmental conditions. It is composed of at least eIF4A, eIF4E and eIF4G.

The protein localises to the cytoplasm. The enzyme catalyses ATP + H2O = ADP + phosphate + H(+). Functionally, ATP-dependent RNA helicase which is a subunit of the eIF4F complex involved in cap recognition and is required for mRNA binding to ribosome. In the current model of translation initiation, eIF4A unwinds RNA secondary structures in the 5'-UTR of mRNAs which is necessary to allow efficient binding of the small ribosomal subunit, and subsequent scanning for the initiator codon. This is ATP-dependent RNA helicase eIF4A (TIF1) from Candida glabrata (strain ATCC 2001 / BCRC 20586 / JCM 3761 / NBRC 0622 / NRRL Y-65 / CBS 138) (Yeast).